A 596-amino-acid chain; its full sequence is DNA mismatch repair protein MutL (596 aa).

This sequence belongs to the DNA mismatch repair MutL/HexB family.

This protein is involved in the repair of mismatches in DNA. It is required for dam-dependent methyl-directed DNA mismatch repair. May act as a 'molecular matchmaker', a protein that promotes the formation of a stable complex between two or more DNA-binding proteins in an ATP-dependent manner without itself being part of a final effector complex. This is DNA mismatch repair protein MutL from Leptospira borgpetersenii serovar Hardjo-bovis (strain JB197).